Here is a 276-residue protein sequence, read N- to C-terminus: 2-dehydro-3-deoxyphosphooctonate aldolase (276 aa).

It belongs to the KdsA family.

Its subcellular location is the cytoplasm. It catalyses the reaction D-arabinose 5-phosphate + phosphoenolpyruvate + H2O = 3-deoxy-alpha-D-manno-2-octulosonate-8-phosphate + phosphate. Its pathway is carbohydrate biosynthesis; 3-deoxy-D-manno-octulosonate biosynthesis; 3-deoxy-D-manno-octulosonate from D-ribulose 5-phosphate: step 2/3. It functions in the pathway bacterial outer membrane biogenesis; lipopolysaccharide biosynthesis. The sequence is that of 2-dehydro-3-deoxyphosphooctonate aldolase from Helicobacter pylori (strain HPAG1).